The following is a 406-amino-acid chain: Putative nickel insertion protein (406 aa).

The protein belongs to the LarC family.

The polypeptide is Putative nickel insertion protein (Methanosphaera stadtmanae (strain ATCC 43021 / DSM 3091 / JCM 11832 / MCB-3)).